Reading from the N-terminus, the 441-residue chain is pH-response regulator protein palC (441 aa).

The BRO1 domain maps to 3–352 (ISYTGQLPTT…GAAYAAILQL (350 aa)). Disordered regions lie at residues 278–304 (RKDD…TSSG) and 414–441 (KWTP…GSYY).

This sequence belongs to the palC family.

Functionally, required for the proteolytic cleavage of the transcription factor RIM101 in response to alkaline ambient pH. The protein is pH-response regulator protein palC of Yarrowia lipolytica (strain CLIB 122 / E 150) (Yeast).